Here is a 152-residue protein sequence, read N- to C-terminus: Regulatory protein RecX (152 aa).

Belongs to the RecX family.

The protein localises to the cytoplasm. Functionally, modulates RecA activity. In Haemophilus influenzae (strain PittEE), this protein is Regulatory protein RecX.